A 291-amino-acid chain; its full sequence is Phosphatidylglycerol--prolipoprotein diacylglyceryl transferase (291 aa).

7 consecutive transmembrane segments (helical) span residues Ile21 to Ala41, Leu60 to Tyr80, Trp96 to Phe116, Phe124 to Ile144, Ser198 to Ile218, Gly225 to Phe245, and Ile258 to Trp278. An a 1,2-diacyl-sn-glycero-3-phospho-(1'-sn-glycerol)-binding site is contributed by Arg143.

It belongs to the Lgt family.

Its subcellular location is the cell inner membrane. It catalyses the reaction L-cysteinyl-[prolipoprotein] + a 1,2-diacyl-sn-glycero-3-phospho-(1'-sn-glycerol) = an S-1,2-diacyl-sn-glyceryl-L-cysteinyl-[prolipoprotein] + sn-glycerol 1-phosphate + H(+). It functions in the pathway protein modification; lipoprotein biosynthesis (diacylglyceryl transfer). Functionally, catalyzes the transfer of the diacylglyceryl group from phosphatidylglycerol to the sulfhydryl group of the N-terminal cysteine of a prolipoprotein, the first step in the formation of mature lipoproteins. This chain is Phosphatidylglycerol--prolipoprotein diacylglyceryl transferase, found in Photorhabdus laumondii subsp. laumondii (strain DSM 15139 / CIP 105565 / TT01) (Photorhabdus luminescens subsp. laumondii).